We begin with the raw amino-acid sequence, 30 residues long: Trypsin inhibitor 1 (30 aa).

3 disulfides stabilise this stretch: cysteine 4–cysteine 21, cysteine 11–cysteine 23, and cysteine 17–cysteine 29.

The protein belongs to the protease inhibitor I7 (squash-type serine protease inhibitor) family.

The protein localises to the secreted. Functionally, inhibits trypsin. The chain is Trypsin inhibitor 1 from Momordica charantia (Bitter gourd).